A 188-amino-acid chain; its full sequence is Ion-translocating oxidoreductase complex subunit B (188 aa).

Positions 1 to 26 are hydrophobic; sequence MNGVLLAIGVLLPICLASGALLGYAA. The 4Fe-4S domain maps to 32–90; sequence QGDPVAERVNALLPQTQCGQCGYPGCKPYAEAIAAGDRINKCPPGGEATIQALADLLDL. Positions 49, 52, 57, 73, 113, 116, 119, 123, 143, 146, 149, and 153 each coordinate [4Fe-4S] cluster. 2 4Fe-4S ferredoxin-type domains span residues 104-133 and 134-163; these read RVAY…GAAR and LMHT…MREI.

This sequence belongs to the 4Fe4S bacterial-type ferredoxin family. RnfB subfamily. The complex is composed of six subunits: RnfA, RnfB, RnfC, RnfD, RnfE and RnfG. [4Fe-4S] cluster is required as a cofactor.

It localises to the cell inner membrane. Functionally, part of a membrane-bound complex that couples electron transfer with translocation of ions across the membrane. In Pseudomonas paraeruginosa (strain DSM 24068 / PA7) (Pseudomonas aeruginosa (strain PA7)), this protein is Ion-translocating oxidoreductase complex subunit B.